The primary structure comprises 342 residues: Galactose mutarotase (342 aa).

Beta-D-galactose-binding positions include 81-82 (NR) and H107. S124 is subject to Phosphoserine. H176 functions as the Proton donor in the catalytic mechanism. Residues 176-178 (HSY), D243, Q279, and E307 each bind beta-D-galactose. E307 serves as the catalytic Proton acceptor.

The protein belongs to the aldose epimerase family. Monomer.

The protein resides in the cytoplasm. It catalyses the reaction alpha-D-galactose = beta-D-galactose. It carries out the reaction alpha-D-glucose = beta-D-glucose. The protein operates within carbohydrate metabolism; hexose metabolism. Its pathway is carbohydrate metabolism; galactose metabolism. Functionally, mutarotase that catalyzes the interconversion of beta-D-galactose and alpha-D-galactose during galactose metabolism. Beta-D-galactose is metabolized in the liver into glucose 1-phosphate, the primary metabolic fuel, by the action of four enzymes that constitute the Leloir pathway: GALM, GALK1 (galactokinase), GALT (galactose-1-phosphate uridylyltransferase) and GALE (UDP-galactose-4'-epimerase). Involved in the maintenance of the equilibrium between the beta- and alpha-anomers of galactose, therefore ensuring a sufficient supply of the alpha-anomer for GALK1. Also active on D-glucose although shows a preference for galactose over glucose. In Bos taurus (Bovine), this protein is Galactose mutarotase (GALM).